The chain runs to 396 residues: Elongation factor Tu (396 aa).

The 195-residue stretch at 11-205 (KPHVNIGTIG…TVDEYIPTPE (195 aa)) folds into the tr-type G domain. Residues 20 to 27 (GHVDHGKT) form a G1 region. 20–27 (GHVDHGKT) serves as a coordination point for GTP. Threonine 27 serves as a coordination point for Mg(2+). Residues 61–65 (GITIN) form a G2 region. Residues 82–85 (DAPG) are G3. Residues 82–86 (DAPGH) and 137–140 (NKCD) each bind GTP. The tract at residues 137–140 (NKCD) is G4. The tract at residues 175 to 177 (SAL) is G5.

This sequence belongs to the TRAFAC class translation factor GTPase superfamily. Classic translation factor GTPase family. EF-Tu/EF-1A subfamily. As to quaternary structure, monomer.

It is found in the cytoplasm. It carries out the reaction GTP + H2O = GDP + phosphate + H(+). In terms of biological role, GTP hydrolase that promotes the GTP-dependent binding of aminoacyl-tRNA to the A-site of ribosomes during protein biosynthesis. This chain is Elongation factor Tu, found in Lactobacillus helveticus (strain DPC 4571).